The chain runs to 214 residues: Heat shock protein 30 (214 aa).

The region spanning 66–183 is the sHSP domain; sequence VPSSLTIQPV…AERVVPINCS (118 aa). A disordered region spans residues 193–214; that stretch reads SKTEGSITDTQKKQENTISKED. The span at 202 to 214 shows a compositional bias: basic and acidic residues; it reads TQKKQENTISKED.

This sequence belongs to the small heat shock protein (HSP20) family.

The polypeptide is Heat shock protein 30 (hsp30) (Oncorhynchus tshawytscha (Chinook salmon)).